The sequence spans 208 residues: Large ribosomal subunit protein uL3 (208 aa).

The segment at 134-153 is disordered; that stretch reads SKFHREAGSTGQCTSPGRTF.

The protein belongs to the universal ribosomal protein uL3 family. As to quaternary structure, part of the 50S ribosomal subunit. Forms a cluster with proteins L14 and L19.

Its function is as follows. One of the primary rRNA binding proteins, it binds directly near the 3'-end of the 23S rRNA, where it nucleates assembly of the 50S subunit. The chain is Large ribosomal subunit protein uL3 from Treponema pallidum (strain Nichols).